The sequence spans 183 residues: Dual-action ribosomal maturation protein DarP (183 aa).

Belongs to the DarP family.

It localises to the cytoplasm. Functionally, member of a network of 50S ribosomal subunit biogenesis factors which assembles along the 30S-50S interface, preventing incorrect 23S rRNA structures from forming. Promotes peptidyl transferase center (PTC) maturation. In Escherichia coli O81 (strain ED1a), this protein is Dual-action ribosomal maturation protein DarP.